Consider the following 615-residue polypeptide: MNNLIKSKLELLPTSPGCYIHKDKNGTIIYVGKAKNLRNRVRSYFRGSHDTKTEALVSEIVDFEFIVTESNIEALLLEINLIKENKPKYNIMLKDDKSYPFIKITNERYPRLIITRQVKKDGGLYFGPYPDVGAANEIKRLLDRIFPFRKCTNPPSKVCFYYHIGQCMAHTICKKDEAYFKSMAQEVSDFLKGQDNKIIDELKGKMAAAAQTMEFERAAEYRDLIQAIGTLRTKQRVMAKDLQNRDVFGYYVDKGWMCVQVFFVRQGKLIERDVNLFPYFNDPDEDFLTYVGQFYQEKSHLVPNEVLIPQDIDEEAVKALVDSKILKPQRGEKKQLVNLAIKNARVSLEQKFNLLEKSVEKTQGAIENLGRLLQIPTPVRIESFDNSNIMGTSPVSAMVVFVNGKPSKKDYRKYKIKTVVGPDDYASMREVIRRRYGRVQREALTPPDLIVIDGGQGQVNIAKQVIQEELGLDIPIAGLQKNDKHQTHELLFGDPLEVVDLSRNSQEFFLLQRIQDEVHRFAITFHRQLRSKNSFSSQLDGIDGLGPKRKQNLMRHFKSLTKIKEASVDEIVEVGVPRAVAEAVQTKLNPQETEILLQVAEERVDYQTEGNHNKP.

A GIY-YIG domain is found at 14-91 (TSPGCYIHKD…IKENKPKYNI (78 aa)). Residues 196 to 231 (NKIIDELKGKMAAAAQTMEFERAAEYRDLIQAIGTL) enclose the UVR domain.

It belongs to the UvrC family. As to quaternary structure, interacts with UvrB in an incision complex.

Its subcellular location is the cytoplasm. The UvrABC repair system catalyzes the recognition and processing of DNA lesions. UvrC both incises the 5' and 3' sides of the lesion. The N-terminal half is responsible for the 3' incision and the C-terminal half is responsible for the 5' incision. In Streptococcus pneumoniae serotype 19F (strain G54), this protein is UvrABC system protein C.